The chain runs to 529 residues: Bifunctional purine biosynthesis protein PurH (529 aa).

Positions 1–148 (MQQRRPVRRA…KNHKDVAIVV (148 aa)) constitute an MGS-like domain. At Lys287 the chain carries N6-acetyllysine.

The protein belongs to the PurH family.

It catalyses the reaction (6R)-10-formyltetrahydrofolate + 5-amino-1-(5-phospho-beta-D-ribosyl)imidazole-4-carboxamide = 5-formamido-1-(5-phospho-D-ribosyl)imidazole-4-carboxamide + (6S)-5,6,7,8-tetrahydrofolate. The catalysed reaction is IMP + H2O = 5-formamido-1-(5-phospho-D-ribosyl)imidazole-4-carboxamide. It participates in purine metabolism; IMP biosynthesis via de novo pathway; 5-formamido-1-(5-phospho-D-ribosyl)imidazole-4-carboxamide from 5-amino-1-(5-phospho-D-ribosyl)imidazole-4-carboxamide (10-formyl THF route): step 1/1. It functions in the pathway purine metabolism; IMP biosynthesis via de novo pathway; IMP from 5-formamido-1-(5-phospho-D-ribosyl)imidazole-4-carboxamide: step 1/1. The chain is Bifunctional purine biosynthesis protein PurH from Escherichia coli O7:K1 (strain IAI39 / ExPEC).